We begin with the raw amino-acid sequence, 236 residues long: tRNA1(Val) (adenine(37)-N6)-methyltransferase (236 aa).

The protein belongs to the methyltransferase superfamily. tRNA (adenine-N(6)-)-methyltransferase family.

Its subcellular location is the cytoplasm. It catalyses the reaction adenosine(37) in tRNA1(Val) + S-adenosyl-L-methionine = N(6)-methyladenosine(37) in tRNA1(Val) + S-adenosyl-L-homocysteine + H(+). Its function is as follows. Specifically methylates the adenine in position 37 of tRNA(1)(Val) (anticodon cmo5UAC). The sequence is that of tRNA1(Val) (adenine(37)-N6)-methyltransferase from Histophilus somni (strain 2336) (Haemophilus somnus).